The sequence spans 144 residues: Mannitol-specific phosphotransferase enzyme IIA component (144 aa).

A PTS EIIA type-2 domain is found at 3-142; sequence ELFSNDNIFL…EEIKQVFEEA (140 aa). The Tele-phosphohistidine intermediate role is filled by His-63. His-63 carries the post-translational modification Phosphohistidine; by HPr.

As to quaternary structure, homodimer or homotrimer. Seems to be a monomer when not phosphorylated.

It localises to the cytoplasm. Functionally, the phosphoenolpyruvate-dependent sugar phosphotransferase system (sugar PTS), a major carbohydrate active transport system, catalyzes the phosphorylation of incoming sugar substrates concomitantly with their translocation across the cell membrane. The enzyme II CmtAB PTS system is involved in D-mannitol transport. This is Mannitol-specific phosphotransferase enzyme IIA component (mtlF) from Staphylococcus aureus (strain MRSA252).